Consider the following 165-residue polypeptide: Endoribonuclease YbeY (165 aa).

3 residues coordinate Zn(2+): His-130, His-134, and His-140.

The protein belongs to the endoribonuclease YbeY family. Zn(2+) serves as cofactor.

The protein localises to the cytoplasm. Single strand-specific metallo-endoribonuclease involved in late-stage 70S ribosome quality control and in maturation of the 3' terminus of the 16S rRNA. This Streptococcus sanguinis (strain SK36) protein is Endoribonuclease YbeY.